A 786-amino-acid polypeptide reads, in one-letter code: Mitochondrial intermediate peptidase (786 aa).

The transit peptide at 1–29 (MSSILLRSYRHHAKVWTRPSSKSSFIRSL) directs the protein to the mitochondrion. Residue His567 participates in Zn(2+) binding. The active site involves Glu568. The Zn(2+) site is built by His571 and His574.

This sequence belongs to the peptidase M3 family. Zn(2+) serves as cofactor.

Its subcellular location is the mitochondrion matrix. It carries out the reaction Release of an N-terminal octapeptide as second stage of processing of some proteins imported into the mitochondrion.. Cleaves proteins, imported into the mitochondrion, to their mature size. While most mitochondrial precursor proteins are processed to the mature form in one step by mitochondrial processing peptidase (MPP), the sequential cleavage by MIP of an octapeptide after initial processing by MPP is a required step for a subgroup of nuclear-encoded precursor proteins destined for the matrix or the inner membrane. The polypeptide is Mitochondrial intermediate peptidase (OCT1) (Meyerozyma guilliermondii (strain ATCC 6260 / CBS 566 / DSM 6381 / JCM 1539 / NBRC 10279 / NRRL Y-324) (Yeast)).